The sequence spans 444 residues: Phosphoglucosamine mutase (444 aa).

Serine 103 acts as the Phosphoserine intermediate in catalysis. Positions 103, 241, 243, and 245 each coordinate Mg(2+). Serine 103 is subject to Phosphoserine.

This sequence belongs to the phosphohexose mutase family. Mg(2+) serves as cofactor. Activated by phosphorylation.

The enzyme catalyses alpha-D-glucosamine 1-phosphate = D-glucosamine 6-phosphate. Functionally, catalyzes the conversion of glucosamine-6-phosphate to glucosamine-1-phosphate. The protein is Phosphoglucosamine mutase of Deinococcus radiodurans (strain ATCC 13939 / DSM 20539 / JCM 16871 / CCUG 27074 / LMG 4051 / NBRC 15346 / NCIMB 9279 / VKM B-1422 / R1).